Reading from the N-terminus, the 616-residue chain is Dihydroxy-acid dehydratase (616 aa).

Aspartate 81 provides a ligand contact to Mg(2+). A [2Fe-2S] cluster-binding site is contributed by cysteine 122. Mg(2+) is bound by residues aspartate 123 and lysine 124. The residue at position 124 (lysine 124) is an N6-carboxylysine. Residue cysteine 195 coordinates [2Fe-2S] cluster. Glutamate 491 provides a ligand contact to Mg(2+). Serine 517 acts as the Proton acceptor in catalysis.

Belongs to the IlvD/Edd family. In terms of assembly, homodimer. It depends on [2Fe-2S] cluster as a cofactor. Requires Mg(2+) as cofactor.

The enzyme catalyses (2R)-2,3-dihydroxy-3-methylbutanoate = 3-methyl-2-oxobutanoate + H2O. It catalyses the reaction (2R,3R)-2,3-dihydroxy-3-methylpentanoate = (S)-3-methyl-2-oxopentanoate + H2O. It functions in the pathway amino-acid biosynthesis; L-isoleucine biosynthesis; L-isoleucine from 2-oxobutanoate: step 3/4. It participates in amino-acid biosynthesis; L-valine biosynthesis; L-valine from pyruvate: step 3/4. In terms of biological role, functions in the biosynthesis of branched-chain amino acids. Catalyzes the dehydration of (2R,3R)-2,3-dihydroxy-3-methylpentanoate (2,3-dihydroxy-3-methylvalerate) into 2-oxo-3-methylpentanoate (2-oxo-3-methylvalerate) and of (2R)-2,3-dihydroxy-3-methylbutanoate (2,3-dihydroxyisovalerate) into 2-oxo-3-methylbutanoate (2-oxoisovalerate), the penultimate precursor to L-isoleucine and L-valine, respectively. The chain is Dihydroxy-acid dehydratase from Escherichia coli O127:H6 (strain E2348/69 / EPEC).